A 424-amino-acid polypeptide reads, in one-letter code: Serine--tRNA ligase (424 aa).

230-232 (TAE) is an L-serine binding site. Residue 261 to 263 (RSE) coordinates ATP. Position 284 (Glu-284) interacts with L-serine. 348–351 (EISS) is an ATP binding site. L-serine is bound at residue Ser-382.

It belongs to the class-II aminoacyl-tRNA synthetase family. Type-1 seryl-tRNA synthetase subfamily. As to quaternary structure, homodimer. The tRNA molecule binds across the dimer.

Its subcellular location is the cytoplasm. The catalysed reaction is tRNA(Ser) + L-serine + ATP = L-seryl-tRNA(Ser) + AMP + diphosphate + H(+). It catalyses the reaction tRNA(Sec) + L-serine + ATP = L-seryl-tRNA(Sec) + AMP + diphosphate + H(+). It functions in the pathway aminoacyl-tRNA biosynthesis; selenocysteinyl-tRNA(Sec) biosynthesis; L-seryl-tRNA(Sec) from L-serine and tRNA(Sec): step 1/1. Functionally, catalyzes the attachment of serine to tRNA(Ser). Is also able to aminoacylate tRNA(Sec) with serine, to form the misacylated tRNA L-seryl-tRNA(Sec), which will be further converted into selenocysteinyl-tRNA(Sec). The polypeptide is Serine--tRNA ligase (Solibacter usitatus (strain Ellin6076)).